Here is an 840-residue protein sequence, read N- to C-terminus: Probable inorganic carbon transporter subunit DabA 2 (840 aa).

The Zn(2+) site is built by cysteine 356, aspartate 358, histidine 540, and cysteine 555.

It belongs to the inorganic carbon transporter (TC 9.A.2) DabA family. Forms a complex with DabB. The cofactor is Zn(2+).

It localises to the cell inner membrane. Part of an energy-coupled inorganic carbon pump. The protein is Probable inorganic carbon transporter subunit DabA 2 of Bradyrhizobium sp. (strain ORS 278).